A 130-amino-acid polypeptide reads, in one-letter code: Small ribosomal subunit protein uS8 (130 aa).

The protein belongs to the universal ribosomal protein uS8 family. Part of the 30S ribosomal subunit. Contacts proteins S5 and S12.

In terms of biological role, one of the primary rRNA binding proteins, it binds directly to 16S rRNA central domain where it helps coordinate assembly of the platform of the 30S subunit. The polypeptide is Small ribosomal subunit protein uS8 (Shewanella sp. (strain MR-7)).